Consider the following 172-residue polypeptide: Adenine phosphoribosyltransferase (172 aa).

This sequence belongs to the purine/pyrimidine phosphoribosyltransferase family. Homodimer.

The protein localises to the cytoplasm. It catalyses the reaction AMP + diphosphate = 5-phospho-alpha-D-ribose 1-diphosphate + adenine. It functions in the pathway purine metabolism; AMP biosynthesis via salvage pathway; AMP from adenine: step 1/1. Functionally, catalyzes a salvage reaction resulting in the formation of AMP, that is energically less costly than de novo synthesis. This chain is Adenine phosphoribosyltransferase, found in Parasynechococcus marenigrum (strain WH8102).